A 731-amino-acid chain; its full sequence is Zinc finger protein 615 (731 aa).

One can recognise a KRAB domain in the interval 8–79; that stretch reads LTLEDVAVDF…EDEIYSRICS (72 aa). C2H2-type zinc fingers lie at residues 204–226, 232–254, 260–282, 288–310, 316–338, 344–366, 372–394, 400–422, 428–450, 456–478, 484–506, 512–534, 540–562, 568–590, 596–618, 624–646, 652–674, 680–702, and 708–730; these read HVCS…QRVH, HVCS…QRTH, YECT…QKTH, YTCS…QRTH, HGCS…QKTH, YICS…HRTH, FICN…QQTH, YKCN…QRTH, YVCT…QRTH, YICN…QRTH, YVCG…QRTH, YICN…RRTH, YVCS…QRTH, YICN…QQTH, YKCN…QRFH, FACT…QRIH, YKCS…QRKH, and YGCS…RRIH.

The protein belongs to the krueppel C2H2-type zinc-finger protein family.

It is found in the nucleus. In terms of biological role, may be involved in transcriptional regulation. This chain is Zinc finger protein 615 (ZNF615), found in Homo sapiens (Human).